The primary structure comprises 225 residues: Large ribosomal subunit protein uL1 (225 aa).

It belongs to the universal ribosomal protein uL1 family. In terms of assembly, part of the 50S ribosomal subunit.

In terms of biological role, binds directly to 23S rRNA. Probably involved in E site tRNA release. Protein L1 is also a translational repressor protein, it controls the translation of its operon by binding to its mRNA. This Thermofilum pendens (strain DSM 2475 / Hrk 5) protein is Large ribosomal subunit protein uL1.